Here is a 144-residue protein sequence, read N- to C-terminus: Trypsin inhibitor STI2 (144 aa).

Residues 1–34 (MRNTARWAATLALTATAVCGPLTGAALATPAAAP) form the signal peptide. Disulfide bonds link Cys66-Cys81 and Cys102-Cys132.

The protein belongs to the protease inhibitor I16 (SSI) family. In terms of assembly, homodimer.

The protein resides in the secreted. Its function is as follows. Inhibitory activity against trypsin. This is Trypsin inhibitor STI2 (sti2) from Streptomyces longisporus.